Consider the following 87-residue polypeptide: Small ribosomal subunit protein bS20 (87 aa).

The interval 1–25 (MANTAQARKRARQSVQRNKHNSSLR) is disordered. Residues 7–22 (ARKRARQSVQRNKHNS) are compositionally biased toward basic residues.

Belongs to the bacterial ribosomal protein bS20 family.

Functionally, binds directly to 16S ribosomal RNA. This chain is Small ribosomal subunit protein bS20, found in Bordetella bronchiseptica (strain ATCC BAA-588 / NCTC 13252 / RB50) (Alcaligenes bronchisepticus).